The chain runs to 241 residues: MKNIDNPSEKIIIALDGMDKDDVVNLLKKIPEIVWVKVGLELFVSEGPDVLSMLREKGKKIFLDLKFHDIPTTVARACFAASQTGAEFISLHTCAGMKALKMANEAANEGASKVNLIPPKLLGITILTSWTRESFCNDLLINQSIDQRVKHLAEIASNSGLGGCVCSPKEVQFLRESYPETFELITPGIRSLGSNVNDQSRVSDASEAIKMGASKLVIGRAITQSNDSAYMFKSFCDKISI.

Residues D16, K37, 64–73 (DLKFHDIPTT), T128, R190, Q199, G219, and R220 contribute to the substrate site. Residue K66 is the Proton donor of the active site.

It belongs to the OMP decarboxylase family. Type 1 subfamily. Homodimer.

It carries out the reaction orotidine 5'-phosphate + H(+) = UMP + CO2. It participates in pyrimidine metabolism; UMP biosynthesis via de novo pathway; UMP from orotate: step 2/2. Its function is as follows. Catalyzes the decarboxylation of orotidine 5'-monophosphate (OMP) to uridine 5'-monophosphate (UMP). The sequence is that of Orotidine 5'-phosphate decarboxylase from Prochlorococcus marinus (strain NATL1A).